Here is a 98-residue protein sequence, read N- to C-terminus: NADH-ubiquinone oxidoreductase chain 4L (98 aa).

3 helical membrane passes run 1 to 21, 29 to 49, and 61 to 81; these read MSLT…GLLM, SLLC…MTIL, and IILL…LVMV.

The protein belongs to the complex I subunit 4L family. In terms of assembly, core subunit of respiratory chain NADH dehydrogenase (Complex I) which is composed of 45 different subunits.

Its subcellular location is the mitochondrion inner membrane. It catalyses the reaction a ubiquinone + NADH + 5 H(+)(in) = a ubiquinol + NAD(+) + 4 H(+)(out). Its function is as follows. Core subunit of the mitochondrial membrane respiratory chain NADH dehydrogenase (Complex I) which catalyzes electron transfer from NADH through the respiratory chain, using ubiquinone as an electron acceptor. Part of the enzyme membrane arm which is embedded in the lipid bilayer and involved in proton translocation. This chain is NADH-ubiquinone oxidoreductase chain 4L (MT-ND4L), found in Chiroderma trinitatum (Little big-eyed bat).